A 455-amino-acid chain; its full sequence is Virion host shutoff protein (455 aa).

Belongs to the herpesviridae VHS protein family.

It localises to the virion. Functionally, minor structural protein that acts as an endoribonuclease during lytic infection. Degrades host mRNAs in the cytoplasm by cutting them at preferred sites, including some in regions of translation initiation. This is Virion host shutoff protein (17) from Homo sapiens (Human).